The sequence spans 480 residues: MARSSLFTFLCLAVFINGCLSQIEQQSPWEFQGSEVWQQHRYQSPRACRLENLRAQDPVRRAEAEAIFTEVWDQDNDEFQCAGVNMIRHTIRPKGLLLPGFSNAPKLIFVAQGFGIRGIAIPGCAETYQTDLRRSQSAGSAFKDQHQKIRPFREGDLLVVPAGVSHWMYNRGQSDLVLIVFADTRNVANQIDPYLRKFYLAGRPEQVERGVEEWERSSRKGSSGEKSGNIFSGFADEFLEEAFQIDGGLVRKLKGEDDERDRIVQVDEDFEVLLPEKDEEERSRGRYIESESESENGLEETICTLRLKQNIGRSVRADVFNPRGGRISTANYHTLPILRQVRLSAERGVLYSNAMVAPHYTVNSHSVMYATRGNARVQVVDNFGQSVFDGEVREGQVLMIPQNFVVIKRASDRGFEWIAFKTNDNAITNLLAGRVSQMRMLPLGVLSNMYRISREEAQRLKYGQQEMRVLSPGRSQGRRE.

Residues 1-21 (MARSSLFTFLCLAVFINGCLS) form the signal peptide. Pyrrolidone carboxylic acid is present on Q22. Cystine bridges form between C48–C81 and C124–C303. 2 consecutive Cupin type-1 domains span residues 51 to 251 (ENLR…GLVR) and 309 to 458 (QNIG…EEAQ). Residues K408 and R468 each contribute to the Mg(2+) site.

The protein belongs to the 11S seed storage protein (globulins) family. Hexamer; each subunit is composed of an acidic and a basic chain derived from a single precursor and linked by a disulfide bond.

Functionally, this is a seed storage protein. The polypeptide is 11S globulin subunit beta (Cucurbita maxima (Pumpkin)).